A 167-amino-acid chain; its full sequence is Photosystem I assembly protein Ycf3 (167 aa).

3 TPR repeats span residues A35 to A68, S72 to L105, and G120 to S153.

It belongs to the Ycf3 family.

The protein resides in the plastid. It is found in the chloroplast thylakoid membrane. Functionally, essential for the assembly of the photosystem I (PSI) complex. May act as a chaperone-like factor to guide the assembly of the PSI subunits. The chain is Photosystem I assembly protein Ycf3 from Chlorokybus atmophyticus (Soil alga).